Reading from the N-terminus, the 252-residue chain is MLEIKSIPAFNDNYIWLIQNSDQRCAVVDPGDAKPVLHYIEQHQLTLEAILITHHHNDHIGGVADLVRAFPNVNVVGPKAEPIPTLTHPVEDGDRLELFDETFLVLGLGGHTLGHIGYVGDGKLFCGDVLFSAGCGRIFEGTAQQMFDSLNKLLALPEETEVFCAHEYTASNVAFALAVEPDNELLHQYRDTVNRLRAQNLPTIPTTLRQEKWINPFLRYLQPSVIHSVSSRTKNSDPLSVFTALREWKNEF.

Residues histidine 54, histidine 56, aspartate 58, histidine 59, histidine 111, aspartate 128, and histidine 166 each coordinate Zn(2+).

The protein belongs to the metallo-beta-lactamase superfamily. Glyoxalase II family. Monomer. Requires Zn(2+) as cofactor.

It carries out the reaction an S-(2-hydroxyacyl)glutathione + H2O = a 2-hydroxy carboxylate + glutathione + H(+). Its pathway is secondary metabolite metabolism; methylglyoxal degradation; (R)-lactate from methylglyoxal: step 2/2. Its function is as follows. Thiolesterase that catalyzes the hydrolysis of S-D-lactoyl-glutathione to form glutathione and D-lactic acid. This chain is Hydroxyacylglutathione hydrolase, found in Vibrio vulnificus (strain CMCP6).